Reading from the N-terminus, the 95-residue chain is Aspartyl/glutamyl-tRNA(Asn/Gln) amidotransferase subunit C (95 aa).

It belongs to the GatC family. As to quaternary structure, heterotrimer of A, B and C subunits.

The enzyme catalyses L-glutamyl-tRNA(Gln) + L-glutamine + ATP + H2O = L-glutaminyl-tRNA(Gln) + L-glutamate + ADP + phosphate + H(+). It carries out the reaction L-aspartyl-tRNA(Asn) + L-glutamine + ATP + H2O = L-asparaginyl-tRNA(Asn) + L-glutamate + ADP + phosphate + 2 H(+). Functionally, allows the formation of correctly charged Asn-tRNA(Asn) or Gln-tRNA(Gln) through the transamidation of misacylated Asp-tRNA(Asn) or Glu-tRNA(Gln) in organisms which lack either or both of asparaginyl-tRNA or glutaminyl-tRNA synthetases. The reaction takes place in the presence of glutamine and ATP through an activated phospho-Asp-tRNA(Asn) or phospho-Glu-tRNA(Gln). This is Aspartyl/glutamyl-tRNA(Asn/Gln) amidotransferase subunit C from Prochlorococcus marinus (strain NATL1A).